We begin with the raw amino-acid sequence, 78 residues long: Conotoxin 5 (78 aa).

Positions 1–22 (MKLTCMMIVTVLFLTAWIFITA) are cleaved as a signal peptide. A propeptide spanning residues 23 to 49 (DNSRNGIENLPRMRRHEMKNPKASKLN) is cleaved from the precursor. Disulfide bonds link C53/C69, C60/C73, and C68/C77.

This sequence belongs to the conotoxin O1 superfamily. As to expression, expressed by the venom duct.

The protein localises to the secreted. The chain is Conotoxin 5 from Conus imperialis (Imperial cone).